Here is a 609-residue protein sequence, read N- to C-terminus: Glutamine--fructose-6-phosphate aminotransferase [isomerizing] (609 aa).

Residue cysteine 2 is the Nucleophile; for GATase activity of the active site. Residues 2 to 219 (CGIFGYLGNQ…SGEFAIVSQG (218 aa)) enclose the Glutamine amidotransferase type-2 domain. 2 SIS domains span residues 285–426 (LSDV…VHGA) and 458–599 (WAQP…IDCP). Catalysis depends on lysine 604, which acts as the For Fru-6P isomerization activity.

As to quaternary structure, homodimer.

Its subcellular location is the cytoplasm. It catalyses the reaction D-fructose 6-phosphate + L-glutamine = D-glucosamine 6-phosphate + L-glutamate. Catalyzes the first step in hexosamine metabolism, converting fructose-6P into glucosamine-6P using glutamine as a nitrogen source. This chain is Glutamine--fructose-6-phosphate aminotransferase [isomerizing], found in Chlamydia pneumoniae (Chlamydophila pneumoniae).